We begin with the raw amino-acid sequence, 283 residues long: Prolyl 4-hydroxylase 1 (283 aa).

At 1–6 (MAPAMK) the chain is on the cytoplasmic side. The chain crosses the membrane as a helical; Signal-anchor for type II membrane protein span at residues 7-27 (IVFGLLTFVTVGMVIGSLLQL). At 28-283 (AFINRLEDSY…TKWMRQKATS (256 aa)) the chain is on the lumenal side. In terms of domain architecture, Fe2OG dioxygenase spans 162–279 (NGELIQVLRY…KWSATKWMRQ (118 aa)). Residues histidine 180, aspartate 182, and histidine 260 each coordinate Fe cation. Position 270 (lysine 270) interacts with 2-oxoglutarate.

The protein belongs to the P4HA family. Fe(2+) is required as a cofactor. L-ascorbate serves as cofactor.

It localises to the endoplasmic reticulum membrane. The catalysed reaction is L-prolyl-[collagen] + 2-oxoglutarate + O2 = trans-4-hydroxy-L-prolyl-[collagen] + succinate + CO2. Catalyzes the post-translational formation of 4-hydroxyproline in -Xaa-Pro-Gly- sequences in proline-rich peptide sequences of plant glycoproteins and other proteins. Hydroxylates preferentially prolines in second positions in the -Pro-Pro-Gly-triplets. Hydroxyprolines are important constituent of many plant cell wall glycoproteins such as extensins, hydroxyproline-rich glycoproteins, lectins and arabinogalactan proteins. Can hydroxylate collagen-like peptides and hypoxia-inducible transcription factor peptides. This Arabidopsis thaliana (Mouse-ear cress) protein is Prolyl 4-hydroxylase 1.